The chain runs to 249 residues: Tumor necrosis factor ligand superfamily member 12 (249 aa).

Residues 1–21 lie on the Cytoplasmic side of the membrane; that stretch reads MAARRSQRRRGRRGEPGTALL. The helical; Signal-anchor for type II membrane protein transmembrane segment at 22 to 42 threads the bilayer; sequence VPLALGLGLALACLGLLLAVV. Topologically, residues 43 to 249 are extracellular; sequence SLGSRASLSA…LTYFGLFQVH (207 aa). The tract at residues 55-85 is disordered; that stretch reads PAQEELVAEEDQDPSELNPQTEESQDPAPFL. A compositionally biased stretch (acidic residues) spans 56–68; the sequence is AQEELVAEEDQDP. One can recognise a THD domain in the interval 107–248; that stretch reads IAAHYEVHPR…FLTYFGLFQV (142 aa). An N-linked (GlcNAc...) asparagine glycan is attached at N139. C191 and C210 are oxidised to a cystine.

Belongs to the tumor necrosis factor family. Homotrimer. Interacts with the angiogenic factor AGGF1/VG5Q. Post-translationally, the soluble form derives from the membrane form by proteolytic processing. As to expression, highly expressed in adult heart, pancreas, skeletal muscle, brain, colon, small intestine, lung, ovary, prostate, spleen, lymph node, appendix and peripheral blood lymphocytes. Low expression in kidney, testis, liver, placenta, thymus and bone marrow. Also detected in fetal kidney, liver, lung and brain.

It localises to the cell membrane. Its subcellular location is the secreted. In terms of biological role, binds to FN14 and possibly also to TNRFSF12/APO3. Weak inducer of apoptosis in some cell types. Mediates NF-kappa-B activation. Promotes angiogenesis and the proliferation of endothelial cells. Also involved in induction of inflammatory cytokines. Promotes IL8 secretion. This chain is Tumor necrosis factor ligand superfamily member 12 (TNFSF12), found in Homo sapiens (Human).